We begin with the raw amino-acid sequence, 532 residues long: Telomerase Cajal body protein 1 (532 aa).

Positions 1–48 (MKTSEELRLAPDSLPSDLVPAPVLQASPADKNTDSEPVPPPCGGDDQL) are disordered. 3 positions are modified to phosphoserine: Ser-27, Ser-61, and Ser-83. A disordered region spans residues 83 to 115 (SPRIEEQEVPENASLPVEETNRPELESGEAMEG). 6 WD repeats span residues 151-190 (RSENFLKGCKWAPDGSCILTNSADNVLRIYNLPPELYSES), 206-251 (EGDT…LRAS), 256-297 (NHLD…RDCE), 307-348 (GQSG…ALLG), 349-389 (GHQG…HLLW), and 395-434 (VTTNQRIYFDLDPSGQFLVSGNTSGVVSVWDISGAFSDCK). Thr-474 bears the Phosphothreonine mark. Phosphoserine is present on Ser-476. Residues 505-532 (CGGGPDPSNPDEDQDEKGQGRTEAVGMS) are disordered.

The protein belongs to the TCAB1 family. Component of the telomerase holoenzyme complex composed of one molecule of TERT, one molecule of WRAP53/TCAB1, two molecules of H/ACA ribonucleoprotein complex subunits DKC1, NOP10, NHP2 and GAR1, and a telomerase RNA template component (TERC). The telomerase holoenzyme complex is associated with TEP1, SMG6/EST1A and POT1. Interacts with the chaperonin-containing T-complex (TRiC) complex; which mediates the folding of WRAP53/TCAB1. Interacts with COIL. Interacts with SMN1. Interacts with RNF8. Interacts with histone H2AX. Phosphorylated at Ser-61 by ATM in response to DNA damage, promoting its interaction with histone H2AX and localization to sites of DNA double-strand breaks.

It localises to the nucleus. Its subcellular location is the cajal body. It is found in the chromosome. The protein localises to the telomere. Functionally, RNA chaperone that plays a key role in telomere maintenance and RNA localization to Cajal bodies. Specifically recognizes and binds the Cajal body box (CAB box) present in both small Cajal body RNAs (scaRNAs) and telomerase RNA template component (TERC). Essential component of the telomerase holoenzyme complex, a ribonucleoprotein complex essential for the replication of chromosome termini that elongates telomeres in most eukaryotes. In the telomerase holoenzyme complex, required to stimulate the catalytic activity of the complex. Acts by specifically binding the CAB box of the TERC RNA and controlling the folding of the CR4/CR5 region of the TERC RNA, a critical step for telomerase activity. In addition, also controls telomerase holoenzyme complex localization to Cajal body. During S phase, required for delivery of TERC to telomeres during S phase and for telomerase activity. In addition to its role in telomere maintenance, also required for Cajal body formation, probably by mediating localization of scaRNAs to Cajal bodies. Also plays a role in DNA repair: phosphorylated by ATM in response to DNA damage and relocalizes to sites of DNA double-strand breaks to promote the repair of DNA double-strand breaks. Acts by recruiting the ubiquitin ligase RNF8 to DNA breaks and promote both homologous recombination (HR) and non-homologous end joining (NHEJ). The sequence is that of Telomerase Cajal body protein 1 from Rattus norvegicus (Rat).